We begin with the raw amino-acid sequence, 537 residues long: 6-phosphogluconate dehydrogenase, decarboxylating 2, chloroplastic (537 aa).

The transit peptide at 1–44 directs the protein to the chloroplast; it reads MRSEVPSSTSPSFLSPPFIHLPLLSLSSPTPLPHSSSSTFSLFS. NADP(+) is bound by residues 55–60, 78–80, 122–124, and asparagine 150; these read GLAVMG, NRT, and VKA. Substrate is bound by residues asparagine 150 and 176–178; that span reads SGG. The active-site Proton acceptor is the lysine 230. 233 to 234 is a binding site for substrate; the sequence is HN. Residue glutamate 237 is the Proton donor of the active site. Substrate-binding residues include tyrosine 238, lysine 308, arginine 335, arginine 500, and histidine 506.

Belongs to the 6-phosphogluconate dehydrogenase family. In terms of assembly, homodimer.

It localises to the plastid. The protein localises to the chloroplast. The catalysed reaction is 6-phospho-D-gluconate + NADP(+) = D-ribulose 5-phosphate + CO2 + NADPH. It participates in carbohydrate degradation; pentose phosphate pathway; D-ribulose 5-phosphate from D-glucose 6-phosphate (oxidative stage): step 3/3. Catalyzes the oxidative decarboxylation of 6-phosphogluconate to ribulose 5-phosphate and CO(2), with concomitant reduction of NADP to NADPH. This is 6-phosphogluconate dehydrogenase, decarboxylating 2, chloroplastic from Spinacia oleracea (Spinach).